We begin with the raw amino-acid sequence, 3434 residues long: Genome polyprotein (3434 aa).

The interval 2-15 (SKKPGGPGKPRVVN) is interaction with host EXOC1. Over 2 to 110 (SKKPGGPGKP…KQKKRGGSET (109 aa)) the chain is Cytoplasmic. Positions 37 to 72 (LLDGRGPIRFVLALLAFFRFTALAPTKALMRRWKSV) are hydrophobic; homodimerization of capsid protein C. Residues 106–125 (GGSETSVLMLIFMLIGFAAA) constitute a propeptide, ER anchor for the capsid protein C, removed in mature form by serine protease NS3. The helical transmembrane segment at 111-131 (SVLMLIFMLIGFAAALKLSTF) threads the bilayer. The Extracellular segment spans residues 132–251 (QGKIMMTVNA…ATRYLTKTEN (120 aa)). Asparagine 140 is a glycosylation site (N-linked (GlcNAc...) asparagine; by host). The chain crosses the membrane as a helical span at residues 252 to 272 (WIIRNPGYALVAVVLGWMLGS). Residues 273 to 277 (NTGQK) are Cytoplasmic-facing. Residues 278 to 292 (VIFTVLLLLVAPAYS) form a helical membrane-spanning segment. Over 293–745 (FNCLGMSSRD…QVFGGAFRTL (453 aa)) the chain is Extracellular. 6 disulfides stabilise this stretch: cysteine 295/cysteine 322, cysteine 352/cysteine 408, cysteine 352/cysteine 413, cysteine 366/cysteine 397, cysteine 384/cysteine 408, and cysteine 384/cysteine 413. The interval 390–403 (DRGWGNGCGLFGKG) is fusion peptide. Asparagine 446 carries N-linked (GlcNAc...) asparagine; by host glycosylation. 2 disulfide bridges follow: cysteine 482-cysteine 580 and cysteine 597-cysteine 628. The chain crosses the membrane as a helical span at residues 746-766 (FGGMSWISPGLLGALLLWMGV). The Cytoplasmic portion of the chain corresponds to 767–772 (NARDKS). A helical transmembrane segment spans residues 773–793 (IALAFLATGGVLLFLATNVHA). Over 794–1218 (DTGCAIDITR…AFAESNNGGD (425 aa)) the chain is Extracellular. Disulfide bonds link cysteine 797/cysteine 808 and cysteine 848/cysteine 936. N-linked (GlcNAc...) asparagine; by host glycosylation is found at asparagine 923 and asparagine 968. 4 cysteine pairs are disulfide-bonded: cysteine 972-cysteine 1016, cysteine 1073-cysteine 1122, cysteine 1084-cysteine 1105, and cysteine 1106-cysteine 1109. N-linked (GlcNAc...) (high mannose) asparagine; by host glycosylation occurs at asparagine 1000. The chain crosses the membrane as a helical span at residues 1219–1239 (VIHLALIAVFKVQPAFLVASL). Residues 1240–1249 (TRSRWTNQEN) are Cytoplasmic-facing. Residues 1250-1270 (LVLVLGAAFFQMAASDLELTI) traverse the membrane as a helical segment. The Lumenal segment spans residues 1271 to 1286 (PGLLNSAATAWMVLRA). A helical membrane pass occupies residues 1287–1307 (MAFPSTSAIAMPMLAMLAPGM). A topological domain (cytoplasmic) is located at residue arginine 1308. Residues 1309–1329 (MLHLDTYRIVLLLIGICSLLN) form a helical membrane-spanning segment. The Lumenal segment spans residues 1330–1340 (ERRRSVEKKKG). Residues 1341–1361 (AVLIGLALTSTGYFSPTIMAA) form a helical membrane-spanning segment. Over 1362 to 1373 (GLMICNPNKKRG) the chain is Cytoplasmic. Residues 1374 to 1394 (WPATEVLTAVGLMFAIVGGLA) traverse the membrane as a helical segment. Residues 1395 to 1397 (ELD) are Lumenal-facing. A helical transmembrane segment spans residues 1398–1418 (IDSMSVPFTIAGLMLVSYVIS). At 1419–1475 (GKATDMWLERAADVSWEAGAAITGTSERLDVQLDDDGDFHLLNDPGVPWKIWVLRMT) the chain is on the cytoplasmic side. The segment at 1426 to 1465 (LERAADVSWEAGAAITGTSERLDVQLDDDGDFHLLNDPGV) is interacts with and activates NS3 protease. The helical intramembrane region spans 1476–1496 (CLSVAAITPRAILPSAFGYWL). Residues 1497-2172 (TLKYTKRGGV…RMALEELPDA (676 aa)) lie on the Cytoplasmic side of the membrane. Positions 1504–1681 (GGVFWDTPSP…ERVEEPVPEA (178 aa)) constitute a Peptidase S7 domain. Active-site charge relay system; for serine protease NS3 activity residues include histidine 1554, aspartate 1578, and serine 1638. The 157-residue stretch at 1684–1840 (PEMLKKRQLT…DTNSPVHDVS (157 aa)) folds into the Helicase ATP-binding domain. An important for RNA-binding region spans residues 1688–1691 (KKRQ). Position 1697-1704 (1697-1704 (LHPGAGKT)) interacts with ATP. A DEAH box motif is present at residues 1788–1791 (DEAH). A Helicase C-terminal domain is found at 1851 to 2016 (GFEWITDYAG…GLVAQLYGPE (166 aa)). Lysine 1892 is subject to N6-acetyllysine; by host. The tract at residues 1958–1979 (AAQRRGRVGRNPSQIGDEYHYG) is disordered. A regulates the ATPase activity of NS3 helicase region spans residues 2167–2171 (EELPD). A helical membrane pass occupies residues 2173–2193 (LETITLIAALGVMTAGFFLLM). Over 2194–2197 (MQRK) the chain is Lumenal. Positions 2198-2218 (GIGKLGLGALVLVVATFFLWM) form an intramembrane region, helical. At 2219 to 2220 (SD) the chain is on the lumenal side. A helical transmembrane segment spans residues 2221–2241 (VSGTKIAGVLLLALLMMVVLI). The Cytoplasmic portion of the chain corresponds to 2242 to 2256 (PEPEKQRSQTDNQLA). Residues 2257-2271 (VFLICVLLVVGLVAA) traverse the membrane as a helical segment. The Lumenal segment spans residues 2272–2309 (NEYGMLERTKTDIRNLFGKSLIEENEVHIPPFDFFTLD). The segment at residues 2310-2330 (LKPATAWALYGGSTVVLTPLI) is an intramembrane region (helical). Over 2331-2366 (KHLVTSQYVTTSLASINAQAGSLFTLPKGIPFTDFD) the chain is Lumenal. A helical membrane pass occupies residues 2367–2394 (LSVALVFLGCWGQVTLTTLIMATILVTL). Residues 2395–2446 (HYGYLLPGWQAEALRAAQKRTAAGIMKNAVVDGIVATDVPELERTTPQMQKR) lie on the Cytoplasmic side of the membrane. Residues 2447–2467 (LGQILLVLASVAAVCVNPRIT) traverse the membrane as a helical segment. The Lumenal portion of the chain corresponds to 2468-2498 (TIREAGILCTAAALTLWDNNASAAWNSTTAT). A helical membrane pass occupies residues 2499–2519 (GLCHVMRGSWIAGASIAWTLI). Residues 2520 to 3434 (KNAEKPAFKR…ETHVSEDRVL (915 aa)) lie on the Cytoplasmic side of the membrane. In terms of domain architecture, mRNA cap 0-1 NS5-type MT spans 2530-2795 (GRAGGRTLGE…DVNLGSGTRA (266 aa)). S-adenosyl-L-methionine is bound at residue serine 2585. Residue serine 2585 is modified to Phosphoserine. Lysine 2590 functions as the For 2'-O-MTase activity in the catalytic mechanism. Residues glycine 2615, tryptophan 2616, threonine 2633, lysine 2634, aspartate 2660, and valine 2661 each contribute to the S-adenosyl-L-methionine site. The active-site For 2'-O-MTase activity is the aspartate 2675. Residue isoleucine 2676 coordinates S-adenosyl-L-methionine. Active-site for 2'-O-MTase activity residues include lysine 2711 and glutamate 2747. Tyrosine 2749 provides a ligand contact to S-adenosyl-L-methionine. Glutamate 2969, histidine 2973, cysteine 2978, and cysteine 2981 together coordinate Zn(2+). The region spanning 3059–3211 (GKIYADDTAG…KPLDDRFSTA (153 aa)) is the RdRp catalytic domain. 3 residues coordinate Zn(2+): histidine 3246, cysteine 3262, and cysteine 3381.

It in the N-terminal section; belongs to the class I-like SAM-binding methyltransferase superfamily. mRNA cap 0-1 NS5-type methyltransferase family. As to quaternary structure, homodimer. Interacts (via N-terminus) with host EXOC1 (via C-terminus); this interaction results in EXOC1 degradation through the proteasome degradation pathway. Forms heterodimers with envelope protein E in the endoplasmic reticulum and Golgi. In terms of assembly, homodimer; in the endoplasmic reticulum and Golgi. Interacts with protein prM. Interacts with non-structural protein 1. As to quaternary structure, homodimer; Homohexamer when secreted. Interacts with envelope protein E. NS1 interacts with NS4B. Interacts with host complement protein CFH; this interaction leads to the degradation of C3. Interacts (via N-terminus) with serine protease NS3. In terms of assembly, forms a heterodimer with serine protease NS3. May form homooligomers. As to quaternary structure, forms a heterodimer with NS2B. Interacts with non-structural protein 2A (via N-terminus). Interacts with NS4B. Interacts with unphosphorylated RNA-directed RNA polymerase NS5; this interaction stimulates RNA-directed RNA polymerase NS5 guanylyltransferase activity. Interacts with serine protease NS3. In terms of assembly, homodimer. Interacts with host STAT2; this interaction inhibits the phosphorylation of the latter, and, when all viral proteins are present (polyprotein), targets STAT2 for degradation. Interacts with serine protease NS3. Specific enzymatic cleavages in vivo yield mature proteins. Cleavages in the lumen of endoplasmic reticulum are performed by host signal peptidase, whereas cleavages in the cytoplasmic side are performed by serine protease NS3. Signal cleavage at the 2K-4B site requires a prior NS3 protease-mediated cleavage at the 4A-2K site. Post-translationally, cleaved in post-Golgi vesicles by a host furin, releasing the mature small envelope protein M, and peptide pr. This cleavage is incomplete as up to 30% of viral particles still carry uncleaved prM. In terms of processing, N-glycosylated. N-glycosylated. The excreted form is glycosylated and this is required for efficient secretion of the protein from infected cells. Post-translationally, acetylated by host KAT5. Acetylation modulates NS3 RNA-binding and unwinding activities and plays an important positive role for viral replication. In terms of processing, phosphorylated on serines residues. This phosphorylation may trigger NS5 nuclear localization.

It localises to the virion. Its subcellular location is the host nucleus. The protein resides in the host cytoplasm. The protein localises to the host perinuclear region. It is found in the secreted. It localises to the virion membrane. Its subcellular location is the host endoplasmic reticulum membrane. The catalysed reaction is Selective hydrolysis of -Xaa-Xaa-|-Yaa- bonds in which each of the Xaa can be either Arg or Lys and Yaa can be either Ser or Ala.. It carries out the reaction RNA(n) + a ribonucleoside 5'-triphosphate = RNA(n+1) + diphosphate. The enzyme catalyses a ribonucleoside 5'-triphosphate + H2O = a ribonucleoside 5'-diphosphate + phosphate + H(+). It catalyses the reaction ATP + H2O = ADP + phosphate + H(+). The catalysed reaction is a 5'-end (5'-triphosphoguanosine)-ribonucleoside in mRNA + S-adenosyl-L-methionine = a 5'-end (N(7)-methyl 5'-triphosphoguanosine)-ribonucleoside in mRNA + S-adenosyl-L-homocysteine. It carries out the reaction a 5'-end (N(7)-methyl 5'-triphosphoguanosine)-ribonucleoside in mRNA + S-adenosyl-L-methionine = a 5'-end (N(7)-methyl 5'-triphosphoguanosine)-(2'-O-methyl-ribonucleoside) in mRNA + S-adenosyl-L-homocysteine + H(+). Its function is as follows. Plays a role in virus budding by binding to the cell membrane and gathering the viral RNA into a nucleocapsid that forms the core of a mature virus particle. During virus entry, may induce genome penetration into the host cytoplasm after hemifusion induced by the surface proteins. Can migrate to the cell nucleus where it modulates host functions. Overcomes the anti-viral effects of host EXOC1 by sequestering and degrading the latter through the proteasome degradation pathway. Inhibits RNA silencing by interfering with host Dicer. Functionally, prevents premature fusion activity of envelope proteins in trans-Golgi by binding to envelope protein E at pH6.0. After virion release in extracellular space, gets dissociated from E dimers. In terms of biological role, acts as a chaperone for envelope protein E during intracellular virion assembly by masking and inactivating envelope protein E fusion peptide. prM is the only viral peptide matured by host furin in the trans-Golgi network probably to avoid catastrophic activation of the viral fusion activity in acidic Golgi compartment prior to virion release. prM-E cleavage is inefficient, and many virions are only partially matured. These uncleaved prM would play a role in immune evasion. Its function is as follows. May play a role in virus budding. Exerts cytotoxic effects by activating a mitochondrial apoptotic pathway through M ectodomain. May display a viroporin activity. Binds to host cell surface receptor and mediates fusion between viral and cellular membranes. Envelope protein is synthesized in the endoplasmic reticulum in the form of heterodimer with protein prM. They play a role in virion budding in the ER, and the newly formed immature particle is covered with 60 spikes composed of heterodimer between precursor prM and envelope protein E. The virion is transported to the Golgi apparatus where the low pH causes dissociation of PrM-E heterodimers and formation of E homodimers. prM-E cleavage is inefficient, and many virions are only partially matured. These uncleaved prM would play a role in immune evasion. Functionally, involved in immune evasion, pathogenesis and viral replication. Once cleaved off the polyprotein, is targeted to three destinations: the viral replication cycle, the plasma membrane and the extracellular compartment. Essential for viral replication. Required for formation of the replication complex and recruitment of other non-structural proteins to the ER-derived membrane structures. Excreted as a hexameric lipoparticle that plays a role against host immune response. Antagonizing the complement function. Binds to the host macrophages and dendritic cells. Inhibits signal transduction originating from Toll-like receptor 3 (TLR3). In terms of biological role, component of the viral RNA replication complex that functions in virion assembly and antagonizes the host alpha/beta interferon antiviral response. Its function is as follows. Required cofactor for the serine protease function of NS3. May have membrane-destabilizing activity and form viroporins. Displays three enzymatic activities: serine protease, NTPase and RNA helicase. NS3 serine protease, in association with NS2B, performs its autocleavage and cleaves the polyprotein at dibasic sites in the cytoplasm: C-prM, NS2A-NS2B, NS2B-NS3, NS3-NS4A, NS4A-2K and NS4B-NS5. NS3 RNA helicase binds RNA and unwinds dsRNA in the 3' to 5' direction. Functionally, regulates the ATPase activity of the NS3 helicase activity. NS4A allows NS3 helicase to conserve energy during unwinding. In terms of biological role, functions as a signal peptide for NS4B and is required for the interferon antagonism activity of the latter. Its function is as follows. Induces the formation of ER-derived membrane vesicles where the viral replication takes place. Inhibits interferon (IFN)-induced host STAT1 phosphorylation and nuclear translocation, thereby preventing the establishment of cellular antiviral state by blocking the IFN-alpha/beta pathway. Inhibits STAT2 translocation in the nucleus after IFN-alpha treatment. Replicates the viral (+) and (-) RNA genome, and performs the capping of genomes in the cytoplasm. NS5 methylates viral RNA cap at guanine N-7 and ribose 2'-O positions. Besides its role in RNA genome replication, also prevents the establishment of cellular antiviral state by blocking the interferon-alpha/beta (IFN-alpha/beta) signaling pathway. Inhibits host TYK2 and STAT2 phosphorylation, thereby preventing activation of JAK-STAT signaling pathway. The chain is Genome polyprotein from Culex annulirostris (Common banded mosquito).